The sequence spans 1270 residues: DNA-directed RNA polymerase subunit beta (1270 aa).

This sequence belongs to the RNA polymerase beta chain family. The RNAP catalytic core consists of 2 alpha, 1 beta, 1 beta' and 1 omega subunit. When a sigma factor is associated with the core the holoenzyme is formed, which can initiate transcription.

The catalysed reaction is RNA(n) + a ribonucleoside 5'-triphosphate = RNA(n+1) + diphosphate. Functionally, DNA-dependent RNA polymerase catalyzes the transcription of DNA into RNA using the four ribonucleoside triphosphates as substrates. The sequence is that of DNA-directed RNA polymerase subunit beta from Porphyromonas cangingivalis.